The sequence spans 255 residues: MKVKVFNLEGEPVEEIELPKVFSTPFRPDLIRRAVIASWTHRIQPQGRDPQAGKRRVTENIGKGHGMARVERIKTSPRFAAFVPFAVGGRRTHPPKVEKIIWEDINKKERRLAIMSAIAATANYDLVRARGHVVDNVVQIPLVVTDDLQKVFKTAQTREIFKKLGVWDDIERAKKNTKIRAGKGKMRGRRYKKAKGPLIVVAKNEGIVQGARNHPGVDVVTVDNLGVEYLAPGTHPGRLTIWTKGAIERLREIYG.

Belongs to the universal ribosomal protein uL4 family. Part of the 50S ribosomal subunit.

Functionally, one of the primary rRNA binding proteins, this protein initially binds near the 5'-end of the 23S rRNA. It is important during the early stages of 50S assembly. It makes multiple contacts with different domains of the 23S rRNA in the assembled 50S subunit and ribosome. Its function is as follows. Forms part of the polypeptide exit tunnel. This Thermococcus kodakarensis (strain ATCC BAA-918 / JCM 12380 / KOD1) (Pyrococcus kodakaraensis (strain KOD1)) protein is Large ribosomal subunit protein uL4.